The following is a 95-amino-acid chain: MTLLTLSDLLTLLRECAGEEESIDLGGDVEDVAFDALGYDSLALLNTVGRIERDYGVQLGDDAVEKATTPRALIEMTNASLTGASPSAGGAARDK.

The Carrier domain maps to 3–81 (LLTLSDLLTL…ALIEMTNASL (79 aa)). At serine 41 the chain carries O-(pantetheine 4'-phosphoryl)serine.

In terms of processing, 4'-phosphopantetheine is transferred from CoA to a specific serine of the apo-ACP-like protein.

Its pathway is antibiotic biosynthesis; oxytetracycline biosynthesis. Acyl carrier protein. The chain is Oxytetracycline polyketide synthase acyl carrier protein from Streptomyces rimosus.